Here is a 287-residue protein sequence, read N- to C-terminus: Kit ligand (287 aa).

The N-terminal stretch at 1–25 (MKKAQTWIITCFCLQLLLLNPLVKT) is a signal peptide. Topologically, residues 26-225 (QSSCGNPVTD…LGFISSSSLQ (200 aa)) are extracellular. 2 disulfides stabilise this stretch: Cys29–Cys117 and Cys68–Cys167. 6 N-linked (GlcNAc...) asparagine glycosylation sites follow: Asn100, Asn106, Asn149, Asn178, Asn200, and Asn206. The chain crosses the membrane as a helical span at residues 226–246 (GISIALTSLLSLLIGFILGVI). Residues 247–287 (YWKKTHPKSRPESNETTQCHGCQEENEISMLQQKEKEHLQV) are Cytoplasmic-facing.

Belongs to the SCF family. In terms of assembly, homodimer, non-covalently linked. In terms of processing, a soluble form is produced by proteolytic processing of isoform 1 in the extracellular domain.

Its subcellular location is the cell membrane. The protein resides in the secreted. It localises to the cytoplasm. It is found in the cytoskeleton. The protein localises to the cell projection. Its subcellular location is the lamellipodium. The protein resides in the filopodium. Its function is as follows. Ligand for the receptor-type protein-tyrosine kinase KIT. Plays an essential role in the regulation of cell survival and proliferation, hematopoiesis, stem cell maintenance, gametogenesis, mast cell development, migration and function, and in melanogenesis. KITLG/SCF binding can activate several signaling pathways. Acts synergistically with other cytokines, probably interleukins. The polypeptide is Kit ligand (KITLG) (Coturnix japonica (Japanese quail)).